Here is a 736-residue protein sequence, read N- to C-terminus: Phosphoribosylformylglycinamidine synthase subunit PurL (736 aa).

Residue histidine 49 is part of the active site. 2 residues coordinate ATP: tyrosine 52 and lysine 91. Glutamate 93 is a Mg(2+) binding site. Residues 94-97 (SHNH) and arginine 116 each bind substrate. Histidine 95 serves as the catalytic Proton acceptor. Position 117 (aspartate 117) interacts with Mg(2+). Glutamine 240 provides a ligand contact to substrate. Aspartate 268 serves as a coordination point for Mg(2+). 312-314 (ESQ) contributes to the substrate binding site. ATP contacts are provided by aspartate 493 and glycine 530. Asparagine 531 contacts Mg(2+). Serine 533 serves as a coordination point for substrate.

This sequence belongs to the FGAMS family. In terms of assembly, monomer. Part of the FGAM synthase complex composed of 1 PurL, 1 PurQ and 2 PurS subunits.

Its subcellular location is the cytoplasm. It catalyses the reaction N(2)-formyl-N(1)-(5-phospho-beta-D-ribosyl)glycinamide + L-glutamine + ATP + H2O = 2-formamido-N(1)-(5-O-phospho-beta-D-ribosyl)acetamidine + L-glutamate + ADP + phosphate + H(+). It participates in purine metabolism; IMP biosynthesis via de novo pathway; 5-amino-1-(5-phospho-D-ribosyl)imidazole from N(2)-formyl-N(1)-(5-phospho-D-ribosyl)glycinamide: step 1/2. Part of the phosphoribosylformylglycinamidine synthase complex involved in the purines biosynthetic pathway. Catalyzes the ATP-dependent conversion of formylglycinamide ribonucleotide (FGAR) and glutamine to yield formylglycinamidine ribonucleotide (FGAM) and glutamate. The FGAM synthase complex is composed of three subunits. PurQ produces an ammonia molecule by converting glutamine to glutamate. PurL transfers the ammonia molecule to FGAR to form FGAM in an ATP-dependent manner. PurS interacts with PurQ and PurL and is thought to assist in the transfer of the ammonia molecule from PurQ to PurL. The protein is Phosphoribosylformylglycinamidine synthase subunit PurL of Rhodopseudomonas palustris (strain ATCC BAA-98 / CGA009).